The following is a 171-amino-acid chain: 3-hydroxydecanoyl-[acyl-carrier-protein] dehydratase (171 aa).

His69 is an active-site residue.

Belongs to the thioester dehydratase family. FabA subfamily. In terms of assembly, homodimer.

It is found in the cytoplasm. It carries out the reaction a (3R)-hydroxyacyl-[ACP] = a (2E)-enoyl-[ACP] + H2O. The enzyme catalyses (3R)-hydroxydecanoyl-[ACP] = (2E)-decenoyl-[ACP] + H2O. The catalysed reaction is (2E)-decenoyl-[ACP] = (3Z)-decenoyl-[ACP]. It functions in the pathway lipid metabolism; fatty acid biosynthesis. Necessary for the introduction of cis unsaturation into fatty acids. Catalyzes the dehydration of (3R)-3-hydroxydecanoyl-ACP to E-(2)-decenoyl-ACP and then its isomerization to Z-(3)-decenoyl-ACP. Can catalyze the dehydratase reaction for beta-hydroxyacyl-ACPs with saturated chain lengths up to 16:0, being most active on intermediate chain length. The chain is 3-hydroxydecanoyl-[acyl-carrier-protein] dehydratase from Caulobacter sp. (strain K31).